The primary structure comprises 132 residues: Replication enhancer protein (132 aa).

This sequence belongs to the geminiviridae replication enhancer protein family. Homooligomer. Interacts with the replication-associated protein (REP). Interacts with host proliferating cell nuclear antigen (PCNA). Interacts with host retinoblastoma-related protein 1 (RBR1), and may thereby deregulate the host cell cycle. Oligomerization and interaction with PCNA are necessary for optimal replication enhancement.

Functionally, increases viral DNA accumulation. Enhances infectivity and symptom expression. This is Replication enhancer protein from Macroptilium lathyroides (Lima bean).